The primary structure comprises 347 residues: Succinylglutamate desuccinylase (347 aa).

Residues H64, E67, and H159 each coordinate Zn(2+). Residue E222 is part of the active site.

The protein belongs to the AspA/AstE family. Succinylglutamate desuccinylase subfamily. Requires Zn(2+) as cofactor.

The catalysed reaction is N-succinyl-L-glutamate + H2O = L-glutamate + succinate. It functions in the pathway amino-acid degradation; L-arginine degradation via AST pathway; L-glutamate and succinate from L-arginine: step 5/5. Functionally, transforms N(2)-succinylglutamate into succinate and glutamate. The sequence is that of Succinylglutamate desuccinylase from Burkholderia cenocepacia (strain ATCC BAA-245 / DSM 16553 / LMG 16656 / NCTC 13227 / J2315 / CF5610) (Burkholderia cepacia (strain J2315)).